The chain runs to 1344 residues: Regulatory-associated protein of TOR 1 (1344 aa).

The segment covering 28-44 has biased composition (basic and acidic residues); it reads CVSSHDDGDSRRKDSEA. 2 disordered regions span residues 28 to 56 and 771 to 818; these read CVSSHDDGDSRRKDSEAKSSSSYGNGTTE and ASTD…DSVS. Low complexity predominate over residues 785–816; that stretch reads SSSPLGSSGLMQGSPLSDDSSLHSDSGMMHDS. WD repeat units lie at residues 1025–1064, 1070–1111, 1125–1164, 1168–1208, 1214–1255, 1259–1298, and 1307–1344; these read RFETGTKTALLHPFSPIVVAADENERIRVWNYEEATLLNG, FPDK…GKQK, GARDLNAVVDWQQQSGYLYASGETSTVTLWDLEKEQLVRS, ESEC…PLVC, QKVE…DTYL, AHRGSLTALAVHRHAPIIASGSAKQLIKVFSLQGEQLGII, and QKIGSVSCLTFHPYQVLLAAGAADSFVSIYTHDNSQAR.

This sequence belongs to the WD repeat RAPTOR family. As to quaternary structure, interacts with TOR, ATPK1 and ML1. Interacts with KIN10. Phosphorylated by KIN10. As to expression, expressed in roots, leaves, flowers and seeds.

It is found in the cytoplasm. Functionally, probable component of the plant TOR kinase pathway that recruits substrates for TOR. Modulates plant cell growth and regulates the activity of ATPK1 kinase in response to osmotic stress. The protein is Regulatory-associated protein of TOR 1 (RAPTOR1) of Arabidopsis thaliana (Mouse-ear cress).